A 310-amino-acid chain; its full sequence is Protein N-terminal asparagine amidohydrolase (310 aa).

As to quaternary structure, monomer.

The protein localises to the cytoplasm. The enzyme catalyses N-terminal L-asparaginyl-[protein] + H2O + H(+) = N-terminal L-aspartyl-[protein] + NH4(+). With respect to regulation, inhibited by micromolar concentrations of copper and zinc ions. Its function is as follows. N-terminal asparagine deamidase that mediates deamidation of N-terminal asparagine residues to aspartate. Required for the ubiquitin-dependent turnover of intracellular proteins that initiate with Met-Asn. These proteins are acetylated on the retained initiator methionine and can subsequently be modified by the removal of N-acetyl methionine by acylaminoacid hydrolase (AAH). Conversion of the resulting N-terminal asparagine to aspartate by NTAN1/PNAD renders the protein susceptible to arginylation, polyubiquitination and degradation as specified by the N-end rule. This enzyme does not act on substrates with internal or C-terminal asparagines and does not act on glutamine residues in any position, nor on acetylated N-terminal peptidyl Asn. This chain is Protein N-terminal asparagine amidohydrolase (NTAN1), found in Homo sapiens (Human).